A 363-amino-acid polypeptide reads, in one-letter code: 3-dehydroquinate synthase (363 aa).

Residues 109–113, 133–134, lysine 146, and lysine 155 each bind NAD(+); these read GATTD and TT. Glutamate 188, histidine 251, and histidine 267 together coordinate Zn(2+).

The protein belongs to the sugar phosphate cyclases superfamily. Dehydroquinate synthase family. The cofactor is NAD(+). Co(2+) is required as a cofactor. It depends on Zn(2+) as a cofactor.

The protein resides in the cytoplasm. The catalysed reaction is 7-phospho-2-dehydro-3-deoxy-D-arabino-heptonate = 3-dehydroquinate + phosphate. Its pathway is metabolic intermediate biosynthesis; chorismate biosynthesis; chorismate from D-erythrose 4-phosphate and phosphoenolpyruvate: step 2/7. Its function is as follows. Catalyzes the conversion of 3-deoxy-D-arabino-heptulosonate 7-phosphate (DAHP) to dehydroquinate (DHQ). This Streptomyces avermitilis (strain ATCC 31267 / DSM 46492 / JCM 5070 / NBRC 14893 / NCIMB 12804 / NRRL 8165 / MA-4680) protein is 3-dehydroquinate synthase.